Reading from the N-terminus, the 241-residue chain is Chlorophyll a-b binding protein 6, chloroplastic (241 aa).

A chloroplast-targeting transit peptide spans 1 to 35; it reads MASNSLMSCGIAAVYPSLLSSSKSKFVSAGVPLPN. Trp48 contacts chlorophyll b. Phe68, Glu87, and His90 together coordinate chlorophyll a. Arg92 contributes to the chlorophyll b binding site. A helical transmembrane segment spans residues 93–113; that stretch reads WAMLAVPGILVPEALGYGNWV. Residue Leu129 coordinates chlorophyll a. A helical transmembrane segment spans residues 132–152; that stretch reads PVPWGTLPTILAIEFLAIAFV. Positions 133, 153, and 156 each coordinate chlorophyll b. Chlorophyll a-binding residues include Lys190, Glu191, Asn194, Arg196, Gln208, and His224. Residues 197 to 217 form a helical membrane-spanning segment; sequence LALLAFVGFCVQQSAYPGTGP.

The protein belongs to the light-harvesting chlorophyll a/b-binding (LHC) protein family. The LHC complex consists of chlorophyll a-b binding proteins. Red-emitting heterodimer with LHCA4. Interacts with LHCA5. Binds at least 14 chlorophylls (8 Chl-a and 6 Chl-b) and carotenoids such as lutein and neoxanthin. is required as a cofactor. In terms of processing, photoregulated by reversible phosphorylation of its threonine residues.

It localises to the plastid. It is found in the chloroplast thylakoid membrane. Functionally, the light-harvesting complex (LHC) functions as a light receptor, it captures and delivers excitation energy to photosystems with which it is closely associated. The sequence is that of Chlorophyll a-b binding protein 6, chloroplastic from Arabidopsis thaliana (Mouse-ear cress).